The primary structure comprises 140 residues: Small ribosomal subunit protein uS8c (140 aa).

Belongs to the universal ribosomal protein uS8 family. In terms of assembly, part of the 30S ribosomal subunit.

It localises to the plastid. It is found in the chloroplast. Its function is as follows. One of the primary rRNA binding proteins, it binds directly to 16S rRNA central domain where it helps coordinate assembly of the platform of the 30S subunit. This is Small ribosomal subunit protein uS8c (rps8) from Euglena gracilis.